The primary structure comprises 47 residues: Large ribosomal subunit protein bL32c (47 aa).

It belongs to the bacterial ribosomal protein bL32 family.

The protein localises to the plastid. The sequence is that of Large ribosomal subunit protein bL32c (rpl32) from Prototheca wickerhamii.